Consider the following 402-residue polypeptide: MNKLLCCALVFLDISIKWTTQETFPPKYLHYDPESSRQLMCDKCPPGTFLKQPCTARRKTVCAPCPDHYYTDTWHTSDECLYCSPVCKELQYVKQECSRTHNRVCECEEGRYLELEFCLKHRSCPPGFGVLHPGTPERNTVCKRCPDGFFSNETSSKAPCRKHTNCSAFGLLLTQKGNATHDNICSGSSESSTHKCGIDMTLCEEAFFRFAVPTKLTPNWLSVLVDNLPGTKVNAESIERIKQRHNSREQTFQLLKLWKHQNKDQDMVKKIIQDIDLCENSVRRHIGHLNLTFEQLLKLMESLPGKKVTTEDVEKTVKTCKSSEQLLKLLSLWRIKNGDQDTRKGLLHALKHLKTYHFPKTVIQSLKKTIRFLHSFTMYRLYRKLFLEMIGNQVQSLKISCL.

Residues 1–21 form the signal peptide; it reads MNKLLCCALVFLDISIKWTTQ. 4 TNFR-Cys repeats span residues 24-62, 64-105, 106-142, and 144-185; these read FPPK…KTVC, PCPD…NRVC, ECEE…NTVC, and RCPD…DNIC. Intrachain disulfides connect Cys41-Cys54, Cys44-Cys62, Cys65-Cys80, Cys83-Cys97, Cys87-Cys105, Cys107-Cys118, Cys124-Cys142, and Cys145-Cys160. Residues Asn165 and Asn178 are each glycosylated (N-linked (GlcNAc...) asparagine). A disulfide bond links Cys166 and Cys185. 2 Death domains span residues 198–269 and 270–365; these read IDMT…DMVK and KIIQ…VIQS.

Homodimer. Interacts with TNFSF10 and TNFSF11. In terms of processing, N-glycosylated. Contains sialic acid residues.

The protein localises to the secreted. In terms of biological role, acts as a decoy receptor for TNFSF11/RANKL and thereby neutralizes its function in osteoclastogenesis. Inhibits the activation of osteoclasts and promotes osteoclast apoptosis. Bone homeostasis seems to depend on the local ratio between TNFSF11 and TNFRSF11B. May also play a role in preventing arterial calcification. May act as decoy receptor for TNFSF10/TRAIL and protect against apoptosis. TNFSF10/TRAIL binding blocks the inhibition of osteoclastogenesis. This is Tumor necrosis factor receptor superfamily member 11B (TNFRSF11B) from Bos taurus (Bovine).